The following is a 115-amino-acid chain: Large ribosomal subunit protein uL24 (115 aa).

Disordered regions lie at residues 45-77 and 96-115; these read VRQSQKNPQGGRLNKEMPMSASNVMLVDPSTGK and KASGESLGQIAPAKASKAAS.

The protein belongs to the universal ribosomal protein uL24 family. As to quaternary structure, part of the 50S ribosomal subunit.

Functionally, one of two assembly initiator proteins, it binds directly to the 5'-end of the 23S rRNA, where it nucleates assembly of the 50S subunit. One of the proteins that surrounds the polypeptide exit tunnel on the outside of the subunit. In Rhodopirellula baltica (strain DSM 10527 / NCIMB 13988 / SH1), this protein is Large ribosomal subunit protein uL24.